A 338-amino-acid polypeptide reads, in one-letter code: Cytoskeleton protein RodZ (338 aa).

At 1–111 (MNTEATHDQN…LGKRRKKRDG (111 aa)) the chain is on the cytoplasmic side. An HTH cro/C1-type domain is found at 19-71 (LRNAREQLGLSQQAVAERLCLKVSTVRDIEEDKAPADLASTFLRGYIRSYARL). Residues 30–49 (QQAVAERLCLKVSTVRDIEE) constitute a DNA-binding region (H-T-H motif). The chain crosses the membrane as a helical; Signal-anchor for type II membrane protein span at residues 112-132 (WLMTFTWLVLFVVIGLSGAWW). Over 133 to 338 (WQDHKAQQEE…TLNAEQSPAQ (206 aa)) the chain is Periplasmic. The span at 155–169 (NANGTNSQSIPLENS) shows a compositional bias: polar residues. The disordered stretch occupies residues 155-240 (NANGTNSQSI…TTPDTATPLP (86 aa)). Over residues 170–188 (TTTVPEATPAPAAPVDTTA) the composition is skewed to low complexity. Polar residues predominate over residues 203–217 (EPQQNAVVPPSQANV). A compositionally biased stretch (low complexity) spans 218 to 240 (DTATTAPAAPATTTTPDTATPLP).

The protein belongs to the RodZ family.

Its subcellular location is the cell inner membrane. Functionally, cytoskeletal protein that is involved in cell-shape control through regulation of the length of the long axis. In Escherichia fergusonii (strain ATCC 35469 / DSM 13698 / CCUG 18766 / IAM 14443 / JCM 21226 / LMG 7866 / NBRC 102419 / NCTC 12128 / CDC 0568-73), this protein is Cytoskeleton protein RodZ.